Consider the following 395-residue polypeptide: uncharacterized protein (395 aa).

Residues 182–238 (KKLEDILSTIAEIEDSIELEKILSLDQFLKSKLSNIKITNNQIDEAKAEFKEMFNKK) adopt a coiled-coil conformation.

This is an uncharacterized protein from Acanthamoeba polyphaga (Amoeba).